We begin with the raw amino-acid sequence, 76 residues long: Tautomerase PptA (76 aa).

The active-site Proton acceptor; via imino nitrogen is P2.

It belongs to the 4-oxalocrotonate tautomerase family. PptA subfamily. As to quaternary structure, homodimer.

Its subcellular location is the cytoplasm. The protein is Tautomerase PptA of Pectobacterium atrosepticum (strain SCRI 1043 / ATCC BAA-672) (Erwinia carotovora subsp. atroseptica).